We begin with the raw amino-acid sequence, 124 residues long: Small ribosomal subunit protein uS12 (124 aa).

Aspartate 89 bears the 3-methylthioaspartic acid mark.

This sequence belongs to the universal ribosomal protein uS12 family. As to quaternary structure, part of the 30S ribosomal subunit. Contacts proteins S8 and S17. May interact with IF1 in the 30S initiation complex.

Its function is as follows. With S4 and S5 plays an important role in translational accuracy. Functionally, interacts with and stabilizes bases of the 16S rRNA that are involved in tRNA selection in the A site and with the mRNA backbone. Located at the interface of the 30S and 50S subunits, it traverses the body of the 30S subunit contacting proteins on the other side and probably holding the rRNA structure together. The combined cluster of proteins S8, S12 and S17 appears to hold together the shoulder and platform of the 30S subunit. This is Small ribosomal subunit protein uS12 from Campylobacter hominis (strain ATCC BAA-381 / DSM 21671 / CCUG 45161 / LMG 19568 / NCTC 13146 / CH001A).